A 144-amino-acid polypeptide reads, in one-letter code: Large ribosomal subunit protein uL15 (144 aa).

The segment at 1-53 is disordered; that stretch reads MRLNTLSPAEGAKHAPKRLGRGIGSGLGKTGGRGHKGQNSRSGGGVRRGFEGG. Positions 21 to 31 are enriched in gly residues; it reads RGIGSGLGKTG.

The protein belongs to the universal ribosomal protein uL15 family. In terms of assembly, part of the 50S ribosomal subunit.

Its function is as follows. Binds to the 23S rRNA. In Pectobacterium atrosepticum (strain SCRI 1043 / ATCC BAA-672) (Erwinia carotovora subsp. atroseptica), this protein is Large ribosomal subunit protein uL15.